A 91-amino-acid chain; its full sequence is ATP synthase subunit c (91 aa).

2 helical membrane passes run 4 to 24 and 53 to 73; these read FTMCVLAAGIGMALGTLGTGI and IGLAMIESLAIYALVVCLIIL.

The protein belongs to the ATPase C chain family. As to quaternary structure, F-type ATPases have 2 components, F(1) - the catalytic core - and F(0) - the membrane proton channel. F(1) has five subunits: alpha(3), beta(3), gamma(1), delta(1), epsilon(1). F(0) has three main subunits: a(1), b(2) and c(10-14). The alpha and beta chains form an alternating ring which encloses part of the gamma chain. F(1) is attached to F(0) by a central stalk formed by the gamma and epsilon chains, while a peripheral stalk is formed by the delta and b chains.

The protein resides in the cell inner membrane. Its function is as follows. F(1)F(0) ATP synthase produces ATP from ADP in the presence of a proton or sodium gradient. F-type ATPases consist of two structural domains, F(1) containing the extramembraneous catalytic core and F(0) containing the membrane proton channel, linked together by a central stalk and a peripheral stalk. During catalysis, ATP synthesis in the catalytic domain of F(1) is coupled via a rotary mechanism of the central stalk subunits to proton translocation. In terms of biological role, key component of the F(0) channel; it plays a direct role in translocation across the membrane. A homomeric c-ring of between 10-14 subunits forms the central stalk rotor element with the F(1) delta and epsilon subunits. The protein is ATP synthase subunit c of Geotalea daltonii (strain DSM 22248 / JCM 15807 / FRC-32) (Geobacter daltonii).